A 256-amino-acid polypeptide reads, in one-letter code: Enolase-phosphatase E1 (256 aa).

D14 and E16 together coordinate Mg(2+). Residues 142 to 143 (SS) and K176 contribute to the substrate site. D201 provides a ligand contact to Mg(2+).

The protein belongs to the HAD-like hydrolase superfamily. MasA/MtnC family. As to quaternary structure, monomer. The cofactor is Mg(2+).

It localises to the cytoplasm. The protein resides in the nucleus. The catalysed reaction is 5-methylsulfanyl-2,3-dioxopentyl phosphate + H2O = 1,2-dihydroxy-5-(methylsulfanyl)pent-1-en-3-one + phosphate. It participates in amino-acid biosynthesis; L-methionine biosynthesis via salvage pathway; L-methionine from S-methyl-5-thio-alpha-D-ribose 1-phosphate: step 3/6. It functions in the pathway amino-acid biosynthesis; L-methionine biosynthesis via salvage pathway; L-methionine from S-methyl-5-thio-alpha-D-ribose 1-phosphate: step 4/6. Functionally, bifunctional enzyme that catalyzes the enolization of 2,3-diketo-5-methylthiopentyl-1-phosphate (DK-MTP-1-P) into the intermediate 2-hydroxy-3-keto-5-methylthiopentenyl-1-phosphate (HK-MTPenyl-1-P), which is then dephosphorylated to form the acireductone 1,2-dihydroxy-3-keto-5-methylthiopentene (DHK-MTPene). The polypeptide is Enolase-phosphatase E1 (Drosophila yakuba (Fruit fly)).